A 144-amino-acid chain; its full sequence is Large ribosomal subunit protein uL15 (144 aa).

A disordered region spans residues 1 to 49 (MRLNTLSPAAGAKSAAKRVGRGIGSGTGKTCGRGHKGQKSRSGGGVRVG). Positions 21–31 (RGIGSGTGKTC) are enriched in gly residues.

It belongs to the universal ribosomal protein uL15 family. In terms of assembly, part of the 50S ribosomal subunit.

Binds to the 23S rRNA. The chain is Large ribosomal subunit protein uL15 from Shewanella sediminis (strain HAW-EB3).